A 689-amino-acid polypeptide reads, in one-letter code: Glycine--tRNA ligase beta subunit (689 aa).

It belongs to the class-II aminoacyl-tRNA synthetase family. As to quaternary structure, tetramer of two alpha and two beta subunits.

It localises to the cytoplasm. It catalyses the reaction tRNA(Gly) + glycine + ATP = glycyl-tRNA(Gly) + AMP + diphosphate. In Enterobacter sp. (strain 638), this protein is Glycine--tRNA ligase beta subunit.